Here is a 480-residue protein sequence, read N- to C-terminus: Phosphoglucosamine mutase (480 aa).

Residues 1 to 41 form a disordered region; that stretch reads MPKHTKKDPREGAPSATGEPQKQAAGRKLFGTDGVRGVANQ. The active-site Phosphoserine intermediate is the S127. S127, D269, D271, and D273 together coordinate Mg(2+). The residue at position 127 (S127) is a Phosphoserine.

It belongs to the phosphohexose mutase family. It depends on Mg(2+) as a cofactor. In terms of processing, activated by phosphorylation.

It carries out the reaction alpha-D-glucosamine 1-phosphate = D-glucosamine 6-phosphate. Functionally, catalyzes the conversion of glucosamine-6-phosphate to glucosamine-1-phosphate. The chain is Phosphoglucosamine mutase from Sorangium cellulosum (strain So ce56) (Polyangium cellulosum (strain So ce56)).